Here is a 538-residue protein sequence, read N- to C-terminus: Glutamyl-tRNA(Gln) amidotransferase subunit B, mitochondrial (538 aa).

This sequence belongs to the GatB/GatE family. GatB subfamily. In terms of assembly, subunit of the heterotrimeric GatCAB amidotransferase (AdT) complex, composed of A, B and C subunits.

The protein resides in the mitochondrion. The enzyme catalyses L-glutamyl-tRNA(Gln) + L-glutamine + ATP + H2O = L-glutaminyl-tRNA(Gln) + L-glutamate + ADP + phosphate + H(+). In terms of biological role, allows the formation of correctly charged Gln-tRNA(Gln) through the transamidation of misacylated Glu-tRNA(Gln) in the mitochondria. The reaction takes place in the presence of glutamine and ATP through an activated gamma-phospho-Glu-tRNA(Gln). In Dictyostelium discoideum (Social amoeba), this protein is Glutamyl-tRNA(Gln) amidotransferase subunit B, mitochondrial.